Here is a 288-residue protein sequence, read N- to C-terminus: Small ribosomal subunit protein uS2 (288 aa).

It belongs to the universal ribosomal protein uS2 family. In terms of assembly, component of the small ribosomal subunit. Mature ribosomes consist of a small (40S) and a large (60S) subunit. The 40S subunit contains about 33 different proteins and 1 molecule of RNA (18S). The 60S subunit contains about 49 different proteins and 3 molecules of RNA (28S, 5.8S and 5S). Interacts with ribosomal protein S21.

The protein resides in the cytoplasm. Functionally, required for the assembly and/or stability of the 40S ribosomal subunit. Required for the processing of the 20S rRNA-precursor to mature 18S rRNA in a late step of the maturation of 40S ribosomal subunits. The sequence is that of Small ribosomal subunit protein uS2 from Aedes aegypti (Yellowfever mosquito).